A 394-amino-acid chain; its full sequence is Na(+)/H(+) antiporter NhaA (394 aa).

11 consecutive transmembrane segments (helical) span residues 14-34 (AGGL…NSAL), 59-79 (LLLW…GLEV), 95-115 (VFPA…YLLF), 125-145 (GWAI…ALLG), 154-174 (VFLL…IALF), 179-199 (VSLQ…YMNW), 213-233 (LVLW…GVIV), 254-274 (GLHP…NAGV), 292-312 (IATG…WLAV), 328-348 (IFAV…IASL), and 363-383 (LGIL…LRLV).

The protein belongs to the NhaA Na(+)/H(+) (TC 2.A.33) antiporter family.

The protein resides in the cell inner membrane. The enzyme catalyses Na(+)(in) + 2 H(+)(out) = Na(+)(out) + 2 H(+)(in). Its function is as follows. Na(+)/H(+) antiporter that extrudes sodium in exchange for external protons. The polypeptide is Na(+)/H(+) antiporter NhaA (Yersinia pestis bv. Antiqua (strain Angola)).